We begin with the raw amino-acid sequence, 177 residues long: Probable DNA-directed RNA polymerase subunit delta (177 aa).

The region spanning 14-81 is the HTH HARE-type domain; sequence CSMIEVVHSV…GENRWGLRSW (68 aa). Positions 93–177 are disordered; sequence PQPKPKKKRK…ETEEEEEEEL (85 aa). The span at 106–177 shows a compositional bias: acidic residues; it reads DGFDDYIEED…ETEEEEEEEL (72 aa).

This sequence belongs to the RpoE family. As to quaternary structure, RNAP is composed of a core of 2 alpha, a beta and a beta' subunits. The core is associated with a delta subunit and one of several sigma factors.

Functionally, participates in both the initiation and recycling phases of transcription. In the presence of the delta subunit, RNAP displays an increased specificity of transcription, a decreased affinity for nucleic acids, and an increased efficiency of RNA synthesis because of enhanced recycling. This chain is Probable DNA-directed RNA polymerase subunit delta, found in Bacillus cereus (strain AH187).